The sequence spans 74 residues: Beta-defensin 39 (74 aa).

The signal sequence occupies residues 1–23 (MKISYFLLLILSLGSSQINPVSG). Disulfide bonds link Cys29-Cys58, Cys36-Cys51, and Cys41-Cys59.

The protein belongs to the beta-defensin family. In terms of tissue distribution, only expressed in epididymis (caput, corpus and cauda).

It localises to the secreted. Has antibacterial activity. The polypeptide is Beta-defensin 39 (Defb39) (Mus musculus (Mouse)).